We begin with the raw amino-acid sequence, 601 residues long: MNLIMPFSIITLTILTIPIMMSYTNKYKTKSYPYHVTSSVSYAFMTSMIPTMMFLLSNQDSYISNWHWMTMQTMKLSLSFKLDFFSIIFVSVALFVTWSIMEFSLWYMHSDPYINQFFKYLLLFLITMMILVTANNMFQLFIGWEGVGIMSFLLIGWWYGRTDANTAALQAILYNRIGDIGFILTMAWLLLHLNSWDLQQIFMLKPTNLLPLLGLLVAAAGKSAQFGLHPWLPSAMEGPTPVSALLHSSTMVVAGIFLLVRFYPLMQNNPTILTMTLCLGAITTLFTAICALTQNDIKKIIAFSTSSQLGLMMVTIGINQPHLAFLHICTHAFFKAMLFMCSGSIIHSLNNEQDIRKMGGLLKAMPFTSSCLMIGSLALTGMPFLTGFYSKDLIIESANTSYSNAWALLITLLATSFTASYSTRLIYFSSLGPPRYLPLITINENNPNLLKPIKRLALGSIFAGFLISNYIPPLITPQTTMPLYMKLSALAVTIMGFMVAMGLNNITLNLKPERPNPLHSFSSLLGYYPNIIHRTTPYYILMMSQNLASLTDILWLEKLAPKSLSQMQLSASMITSNQKGLIKLYFMSFIISMTLATMLII.

The next 15 membrane-spanning stretches (helical) occupy residues Leu3 to Tyr23, Val36 to Leu56, Phe84 to Ser104, Ile114 to Ala134, Leu140 to Gly160, Ala171 to Leu191, Ile201 to Gly221, Thr240 to Val260, Ile272 to Leu292, Ala324 to Ile346, Met365 to Leu385, Asn404 to Ile426, Leu456 to Thr476, Leu483 to Leu503, and Leu581 to Ile601.

The protein belongs to the complex I subunit 5 family.

The protein localises to the mitochondrion inner membrane. It catalyses the reaction a ubiquinone + NADH + 5 H(+)(in) = a ubiquinol + NAD(+) + 4 H(+)(out). Core subunit of the mitochondrial membrane respiratory chain NADH dehydrogenase (Complex I) that is believed to belong to the minimal assembly required for catalysis. Complex I functions in the transfer of electrons from NADH to the respiratory chain. The immediate electron acceptor for the enzyme is believed to be ubiquinone. The sequence is that of NADH-ubiquinone oxidoreductase chain 5 (MT-ND5) from Dasypus novemcinctus (Nine-banded armadillo).